We begin with the raw amino-acid sequence, 927 residues long: Band 3 anion transport protein (927 aa).

M1 is modified (N-acetylmethionine). Residues 1–420 (MGDMQDHEKV…LSDITDALSP (420 aa)) are Cytoplasmic-facing. Position 18 is a phosphoserine (S18). Phosphotyrosine is present on residues Y31 and Y56. The tract at residues 69–303 (SQVYVELQEL…LGRAAATLMT (235 aa)) is globular. Residues 190 to 199 (AVLTRSGAPS) form an interaction with ANK1 region. Phosphoserine occurs at positions 199 and 222. The interval 317–370 (RGELLSSLDSFLDCSLVLPPTEAPSEKALLNLVPVQKELLRKRYLPRPAKPDPN) is dimerization arm. The disordered stretch occupies residues 367–390 (PDPNLYEALDGGKEGPGDEDDPLR). Y372 is modified (phosphotyrosine). Residues 421-444 (QVLAAVIFIYFAALSPAVTFGGLL) form a helical membrane-spanning segment. Residues 445 to 452 (GEKTRNLM) are Extracellular-facing. A helical membrane pass occupies residues 453–473 (GVSELLISTAVQGILFALLGA). At 474 to 476 (QPL) the chain is on the cytoplasmic side. Residues 477–493 (LVLGFSGPLLVFEEAFY) traverse the membrane as a discontinuously helical segment. Residues 494–502 (SFCESNNLE) are Extracellular-facing. A helical membrane pass occupies residues 503–523 (YIVGRAWIGFWLILLVVLVVA). The Cytoplasmic portion of the chain corresponds to 524–535 (FEGSFLVQYISR). Residues 536-558 (YTQEIFSFLISLIFIYETFSKLI) form a helical membrane-spanning segment. Residues 559–586 (KIFQDYPLQESYAPVVMKPKPQGPVPNT) are Extracellular-facing. Residues 587–607 (ALLSLVLMVGTFLLAMMLRKF) form a helical membrane-spanning segment. The Cytoplasmic portion of the chain corresponds to 608–618 (KNSTYFPGKLR). A helical membrane pass occupies residues 619-639 (RVIGDFGVPISILIMVLVDTF). Residues 640–679 (IKNTYTQKLSVPDGLKVSNSSARGWVIHPLGLYNHFPKWM) are Extracellular-facing. An N-linked (GlcNAc...) asparagine glycan is attached at N658. Residues 680–700 (MFASVLPALLVFILIFLESQI) form a helical membrane-spanning segment. The Cytoplasmic segment spans residues 701–716 (TTLIVSKPERKMIKGS). Residues 717–735 (GFHLDLLLVVGMGGVAALF) traverse the membrane as a helical segment. Residues 736–753 (GMPWLSATTVRSVTHANA) form a discontinuously helical membrane-spanning segment. At 754–776 (LTVMGKASGPGAAAQIQEVKEQR) the chain is on the cytoplasmic side. 2 consecutive transmembrane segments (helical) span residues 777 to 797 (ISGL…PILS) and 798 to 816 (RIPL…ITSL). At 817-854 (SGIQLFDRILLLFKPPKYHPDVPFVKRVKTWRMHLFTG) the chain is on the cytoplasmic side. The segment at residues 855-885 (IQIICLAVLWVVKSTPASLALPFVLILTVPL) is an intramembrane region (discontinuously helical). C859 is lipidated: S-palmitoyl cysteine. The Cytoplasmic portion of the chain corresponds to 886 to 927 (RRLLLPLIFRELELQCLDGDDAKVTFDEAEGLDEYDEVPMPV). At Y920 the chain carries Phosphotyrosine.

This sequence belongs to the anion exchanger (TC 2.A.31) family. A dimer in solution, but in its membrane environment, it exists primarily as a mixture of dimers and tetramers and spans the membrane asymmetrically. Component of the ankyrin-1 complex in the erythrocyte, composed of ANK1, RHCE, RHAG, SLC4A1, EPB42, GYPA, GYPB and AQP1. Interacts with STOM; this interaction positively regulates SLC4A1 activity. Interacts with GYPA; a GYPA monomer is bound at each end of the SLC4A1 dimer forming a heterotetramer. Three SLC4A1 dimers (Band 3-I, Band 3-II and Band 3-III) participates in the ankyrin-1 complex. Interacts (via the cytoplasmic domain) with EPB42; this interaction is mediated by the SLC4A1 Band 3-I dimer. Interacts (via the cytoplasmic domain) directly with ANK1; this interaction is mediated by the SLC4A1 Band 3-II and Band 3-III dimers. In terms of assembly, interacts with TMEM139. Kidney.

It is found in the cell membrane. The protein resides in the basolateral cell membrane. The enzyme catalyses hydrogencarbonate(in) + chloride(out) = hydrogencarbonate(out) + chloride(in). Functionally, functions both as a transporter that mediates electroneutral anion exchange across the cell membrane and as a structural protein. Component of the ankyrin-1 complex of the erythrocyte membrane; required for normal flexibility and stability of the erythrocyte membrane and for normal erythrocyte shape via the interactions of its cytoplasmic domain with cytoskeletal proteins, glycolytic enzymes, and hemoglobin. Functions as a transporter that mediates the 1:1 exchange of inorganic anions across the erythrocyte membrane. Mediates chloride-bicarbonate exchange in the kidney, and is required for normal acidification of the urine. In Rattus norvegicus (Rat), this protein is Band 3 anion transport protein.